The sequence spans 388 residues: LL-diaminopimelate aminotransferase (388 aa).

Substrate-binding residues include Y13, G38, K102, Y126, and N176. Residues 101 to 102 (SK), Y126, N176, Y207, and 235 to 237 (SLS) each bind pyridoxal 5'-phosphate. An N6-(pyridoxal phosphate)lysine modification is found at K238. R246 is a binding site for pyridoxal 5'-phosphate. R364 is a substrate binding site.

It belongs to the class-I pyridoxal-phosphate-dependent aminotransferase family. LL-diaminopimelate aminotransferase subfamily. As to quaternary structure, homodimer. Pyridoxal 5'-phosphate serves as cofactor.

It catalyses the reaction (2S,6S)-2,6-diaminopimelate + 2-oxoglutarate = (S)-2,3,4,5-tetrahydrodipicolinate + L-glutamate + H2O + H(+). Its pathway is amino-acid biosynthesis; L-lysine biosynthesis via DAP pathway; LL-2,6-diaminopimelate from (S)-tetrahydrodipicolinate (aminotransferase route): step 1/1. Its function is as follows. Involved in the synthesis of meso-diaminopimelate (m-DAP or DL-DAP), required for both lysine and peptidoglycan biosynthesis. Catalyzes the direct conversion of tetrahydrodipicolinate to LL-diaminopimelate. This chain is LL-diaminopimelate aminotransferase, found in Dehalococcoides mccartyi (strain CBDB1).